Reading from the N-terminus, the 139-residue chain is Peptide methionine sulfoxide reductase B5 (139 aa).

A2 is modified (N-acetylalanine). One can recognise a MsrB domain in the interval 12–133 (EEEWRAVLSP…NSVSISFNPA (122 aa)). Zn(2+)-binding residues include C51, C54, C97, and C100. A disulfide bridge connects residues C69 and C122. C122 (nucleophile) is an active-site residue.

Belongs to the MsrB Met sulfoxide reductase family. It depends on Zn(2+) as a cofactor.

The protein localises to the cytoplasm. Its subcellular location is the cytosol. It catalyses the reaction L-methionyl-[protein] + [thioredoxin]-disulfide + H2O = L-methionyl-(R)-S-oxide-[protein] + [thioredoxin]-dithiol. Its function is as follows. Catalyzes the reduction of methionine sulfoxide (MetSO) to methionine in proteins. Plays a protective role against oxidative stress by restoring activity to proteins that have been inactivated by methionine oxidation. MSRB family specifically reduces the MetSO R-enantiomer. The sequence is that of Peptide methionine sulfoxide reductase B5 (MSRB5) from Arabidopsis thaliana (Mouse-ear cress).